The following is a 693-amino-acid chain: Heat shock protein homolog SSE1 (693 aa).

Residues 665 to 693 (LAEKLAAQRKAESEKKESKADAEGDVELD) are disordered. A compositionally biased stretch (basic and acidic residues) spans 673-686 (RKAESEKKESKADA).

This sequence belongs to the heat shock protein 70 family.

It is found in the cytoplasm. This chain is Heat shock protein homolog SSE1 (SSE1), found in Lachancea kluyveri (strain ATCC 58438 / CBS 3082 / BCRC 21498 / NBRC 1685 / JCM 7257 / NCYC 543 / NRRL Y-12651) (Yeast).